We begin with the raw amino-acid sequence, 121 residues long: CRISPR system Cms protein Csm2 (121 aa).

The protein belongs to the CRISPR-associated Csm2 family. As to quaternary structure, part of the Csm effector complex that includes at least Cas10(1), Csm2(3), Csm3(5), Csm4(1), Csm5(1) and mature crRNA. The Csm complex is elongated and slightly twisted with a maximal length of 215 Angstroms and a diameter of 75-80 Angstroms. It has been modeled to have a central protein filamant of Csm3 subunits along which the dsRNA helix of paired crRNA and target RNA binds. The filament is capped at one end by Cas10 and Csm4 and at the other end by Csm5; ssDNA is thought to bind to the N-terminal HD domain of Cas10. Csm with a precursor crRNA does not include Csm5, while Cas6, the enzyme probably involved in pre-crRNA processing, is found associated with a subset of the Csm complex.

Its function is as follows. CRISPR (clustered regularly interspaced short palindromic repeat) is an adaptive immune system that provides protection against mobile genetic elements (viruses, transposable elements and conjugative plasmids). CRISPR clusters contain spacers, sequences complementary to antecedent mobile elements, and target invading nucleic acids. CRISPR clusters are transcribed and processed into CRISPR RNA (crRNA). The type III-A Csm effector complex binds crRNA and acts as a crRNA-guided RNase, DNase and cyclic oligoadenylate synthase; binding of target RNA cognate to the crRNA is required for all activities. In a heterologous host this Csm effector complex restricts ssRNA phage MS2, suggesting it may target RNA viruses in vivo. In terms of biological role, csm functions as a non-specific ssDNase. Base-pairing between crRNA and target RNA to form a ternary Csm complex activates a ssDNase activity; target RNA cleavage suppresses the ssDNase, a temporal control that prevents uncontrolled DNA degradation. Viral RNA transcripts probably tether the Csm complex to the viral genome, recruiting Cas10 ssDNA activity which is able to degrade DNA in the transcription bubble, spatially controlling the DNase activity. Functionally, this subunit may be involved in monitoring complementarity of crRNA and target RNA. This chain is CRISPR system Cms protein Csm2, found in Streptococcus thermophilus.